A 1243-amino-acid chain; its full sequence is DNA polymerase II large subunit (1243 aa).

This sequence belongs to the archaeal DNA polymerase II family. Heterodimer of a large subunit and a small subunit.

It carries out the reaction DNA(n) + a 2'-deoxyribonucleoside 5'-triphosphate = DNA(n+1) + diphosphate. The enzyme catalyses Exonucleolytic cleavage in the 3'- to 5'-direction to yield nucleoside 5'-phosphates.. Possesses two activities: a DNA synthesis (polymerase) and an exonucleolytic activity that degrades single-stranded DNA in the 3'- to 5'-direction. Has a template-primer preference which is characteristic of a replicative DNA polymerase. This is DNA polymerase II large subunit from Nanoarchaeum equitans (strain Kin4-M).